Here is a 61-residue protein sequence, read N- to C-terminus: uncharacterized protein (61 aa).

This is an uncharacterized protein from Bacillus subtilis (strain 168).